Here is a 207-residue protein sequence, read N- to C-terminus: Ribonuclease HII (207 aa).

Positions 18 to 206 (EFIVGVDEVG…VKNILQLLEK (189 aa)) constitute an RNase H type-2 domain. Residues D24, E25, and D115 each coordinate a divalent metal cation.

This sequence belongs to the RNase HII family. Requires Mn(2+) as cofactor. Mg(2+) is required as a cofactor.

The protein resides in the cytoplasm. The catalysed reaction is Endonucleolytic cleavage to 5'-phosphomonoester.. Its function is as follows. Endonuclease that specifically degrades the RNA of RNA-DNA hybrids. The sequence is that of Ribonuclease HII from Hydrogenovibrio crunogenus (strain DSM 25203 / XCL-2) (Thiomicrospira crunogena).